Reading from the N-terminus, the 460-residue chain is Ribosomal protein uS12 methylthiotransferase RimO (460 aa).

The 111-residue stretch at 9-119 folds into the MTTase N-terminal domain; that stretch reads PKVGFVSLGC…VMEAVHAALP (111 aa). Residues cysteine 18, cysteine 54, cysteine 83, cysteine 150, cysteine 154, and cysteine 157 each coordinate [4Fe-4S] cluster. Residues 136 to 374 enclose the Radical SAM core domain; sequence LTPRHYAYLK…AKQAEISALR (239 aa). The TRAM domain occupies 376 to 444; it reads EAKIGSVQQC…EHDLFGDALP (69 aa).

The protein belongs to the methylthiotransferase family. RimO subfamily. Requires [4Fe-4S] cluster as cofactor.

It localises to the cytoplasm. The enzyme catalyses L-aspartate(89)-[ribosomal protein uS12]-hydrogen + (sulfur carrier)-SH + AH2 + 2 S-adenosyl-L-methionine = 3-methylsulfanyl-L-aspartate(89)-[ribosomal protein uS12]-hydrogen + (sulfur carrier)-H + 5'-deoxyadenosine + L-methionine + A + S-adenosyl-L-homocysteine + 2 H(+). Functionally, catalyzes the methylthiolation of an aspartic acid residue of ribosomal protein uS12. This Xanthomonas oryzae pv. oryzae (strain PXO99A) protein is Ribosomal protein uS12 methylthiotransferase RimO.